The sequence spans 347 residues: GMP reductase (347 aa).

NADP(+) is bound at residue 108-131 (ADFQKTKDIMALTEDLIFICIDIA). Residues G181 and G183 each coordinate K(+). Residue C186 is the Thioimidate intermediate of the active site. 216 to 239 (IIGDGGCSCAGDVSKAFGGGADFV) lines the NADP(+) pocket.

This sequence belongs to the IMPDH/GMPR family. GuaC type 1 subfamily. Homotetramer.

It carries out the reaction IMP + NH4(+) + NADP(+) = GMP + NADPH + 2 H(+). Catalyzes the irreversible NADPH-dependent deamination of GMP to IMP. It functions in the conversion of nucleobase, nucleoside and nucleotide derivatives of G to A nucleotides, and in maintaining the intracellular balance of A and G nucleotides. The protein is GMP reductase of Photobacterium profundum (strain SS9).